A 1040-amino-acid polypeptide reads, in one-letter code: Multidrug resistance protein MdtB (1040 aa).

Helical transmembrane passes span 16 to 36 (FIMR…AGII), 342 to 362 (DTQF…YLFL), 369 to 389 (IIPG…MVFL), 396 to 416 (LTLM…IVVI), 440 to 460 (IGFT…PLLF), 472 to 492 (FAVT…TLTP), 537 to 557 (WLTL…WVFI), 863 to 883 (LGST…VLGV), 888 to 908 (FIHP…ALLA), 911 to 931 (LAGS…IGIV), 968 to 988 (ILMT…STGV), and 998 to 1018 (IGMV…TPVI).

The protein belongs to the resistance-nodulation-cell division (RND) (TC 2.A.6) family. MdtB subfamily. Part of a tripartite efflux system composed of MdtA, MdtB and MdtC. MdtB forms a heteromultimer with MdtC.

The protein localises to the cell inner membrane. This chain is Multidrug resistance protein MdtB, found in Klebsiella pneumoniae (strain 342).